Here is a 388-residue protein sequence, read N- to C-terminus: Succinate--CoA ligase [ADP-forming] subunit beta (388 aa).

Positions 9 to 245 constitute an ATP-grasp domain; sequence KALLKKYGVS…KSQENERELK (237 aa). Residues lysine 46, 53 to 55, glutamate 100, tyrosine 103, and glutamate 108 each bind ATP; that span reads GRG. Mg(2+) contacts are provided by asparagine 200 and aspartate 214. Residues asparagine 265 and 322-324 contribute to the substrate site; that span reads GIV.

It belongs to the succinate/malate CoA ligase beta subunit family. Heterotetramer of two alpha and two beta subunits. It depends on Mg(2+) as a cofactor.

It carries out the reaction succinate + ATP + CoA = succinyl-CoA + ADP + phosphate. The catalysed reaction is GTP + succinate + CoA = succinyl-CoA + GDP + phosphate. Its pathway is carbohydrate metabolism; tricarboxylic acid cycle; succinate from succinyl-CoA (ligase route): step 1/1. Its function is as follows. Succinyl-CoA synthetase functions in the citric acid cycle (TCA), coupling the hydrolysis of succinyl-CoA to the synthesis of either ATP or GTP and thus represents the only step of substrate-level phosphorylation in the TCA. The beta subunit provides nucleotide specificity of the enzyme and binds the substrate succinate, while the binding sites for coenzyme A and phosphate are found in the alpha subunit. This chain is Succinate--CoA ligase [ADP-forming] subunit beta, found in Acinetobacter baylyi (strain ATCC 33305 / BD413 / ADP1).